Reading from the N-terminus, the 147-residue chain is Large ribosomal subunit protein bL9 (147 aa).

The protein belongs to the bacterial ribosomal protein bL9 family.

Binds to the 23S rRNA. The protein is Large ribosomal subunit protein bL9 of Campylobacter jejuni subsp. jejuni serotype O:23/36 (strain 81-176).